The following is a 957-amino-acid chain: SH3 domain-binding protein 4-A (957 aa).

One can recognise an SH3 1 domain in the interval E54–Y113. One can recognise a ZU5 domain in the interval T312–V449. In terms of domain architecture, SH3 2 spans T649–K719.

Homodimer or homooligomer.

It localises to the membrane. The protein localises to the clathrin-coated pit. It is found in the cytoplasmic vesicle. Its subcellular location is the clathrin-coated vesicle. The protein resides in the nucleus. Functionally, possible role in regulating endocytosis of the transferrin receptor at the plasma membrane. Alternatively, may function as a negative regulator of the amino acid-induced TOR signaling by inhibiting the formation of active Rag GTPase complexes. Preferentially binds inactive Rag GTPase complexes and prevents their interaction with the mTORC1 complex inhibiting its relocalization to lysosomes and its activation. Thereby, may indirectly regulate cell growth, proliferation and autophagy. In Xenopus laevis (African clawed frog), this protein is SH3 domain-binding protein 4-A (sh3bp4-a).